The primary structure comprises 501 residues: Lycopene beta cyclase, chloroplastic (501 aa).

The transit peptide at Met1 to Ser48 directs the protein to the chloroplast. N-acetylvaline is present on Val49. Position 85-113 (Leu85–Pro113) interacts with NAD(+).

The protein belongs to the lycopene cyclase family.

The protein localises to the plastid. It is found in the chloroplast. The enzyme catalyses a carotenoid psi-end group = a carotenoid beta-end derivative. Its pathway is carotenoid biosynthesis; beta-carotene biosynthesis. It functions in the pathway carotenoid biosynthesis; beta-zeacarotene biosynthesis. Functionally, involved in carotenoid biosynthesis. Catalyzes the double cyclization reaction which converts lycopene to beta-carotene and neurosporene to beta-zeacarotene. Major lycopene beta-cyclase that does not seem to be involved in neoxanthin synthesis. Involved in salt tolerance improvement by increasing synthesis of carotenoids, which impairs reactive oxygen species (ROS) and protects the photosynthetic system under salt stress. This chain is Lycopene beta cyclase, chloroplastic, found in Arabidopsis thaliana (Mouse-ear cress).